We begin with the raw amino-acid sequence, 404 residues long: Voltage-gated potassium channel subunit beta-3 (404 aa).

Residues 1 to 14 (MQVSIACTEQNLRS) are compositionally biased toward polar residues. Residues 1–78 (MQVSIACTEQ…RESTGRGTGM (78 aa)) are disordered. The span at 28–50 (PGGGNGGPVGGGHGNPPGGGGLG) shows a compositional bias: gly residues. NADP(+)-binding residues include Thr-97, Trp-98, Gln-104, and Asp-126. Residue Tyr-131 is the Proton donor/acceptor of the active site. Positions 199, 229, 230, 255, 284, 285, 286, 287, 288, 289, 295, 305, 364, 366, 370, and 373 each coordinate NADP(+).

It belongs to the shaker potassium channel beta subunit family. In terms of assembly, forms heteromultimeric complex with alpha subunits. Interacts with KCNA5 and KCNB2. In terms of tissue distribution, predominantly expressed in brain. Strongest expression in olfactory bulb and thalamic nuclei. Not detected in heart, spleen, lung, liver, skeletal muscle, kidney and testis.

The protein localises to the cytoplasm. Functionally, regulatory subunit of the voltage-gated potassium (Kv) channels composed of pore-forming and potassium-conducting alpha subunits and of regulatory beta subunits. The beta-3/KCNAB3 subunit may mediate closure of potassium channels. Inactivates Kv1.4/KCNA4 alpha subunit-containing Kv channel current but not Kv1.1/KCNA1 or Kv1.5/KCNA5 channels. May display nicotinamide adenine dinucleotide phosphate (NADPH)-dependent aldoketoreductase activity. The binding of oxidized and reduced NADP(H) cofactors may be required for the regulation of potassium channel activity. The sequence is that of Voltage-gated potassium channel subunit beta-3 from Rattus norvegicus (Rat).